We begin with the raw amino-acid sequence, 688 residues long: Methionine--tRNA ligase (688 aa).

The 'HIGH' region motif lies at 13–23; it reads PYANGNFHIGH. Positions 144, 147, 157, and 160 each coordinate Zn(2+). The 'KMSKS' region signature appears at 342–346; it reads KMSKS. Lys-345 contacts ATP. The tRNA-binding domain occupies 582-688; sequence DFAKVDLRIA…PGAQPGMRIH (107 aa).

It belongs to the class-I aminoacyl-tRNA synthetase family. MetG type 1 subfamily. As to quaternary structure, homodimer. Zn(2+) is required as a cofactor.

It localises to the cytoplasm. The catalysed reaction is tRNA(Met) + L-methionine + ATP = L-methionyl-tRNA(Met) + AMP + diphosphate. In terms of biological role, is required not only for elongation of protein synthesis but also for the initiation of all mRNA translation through initiator tRNA(fMet) aminoacylation. This chain is Methionine--tRNA ligase, found in Acidovorax ebreus (strain TPSY) (Diaphorobacter sp. (strain TPSY)).